The following is a 177-amino-acid chain: Small ribosomal subunit protein uS4 (177 aa).

Positions 104–166 (RRLQTIVYKK…PTSPFKQHPP (63 aa)) constitute an S4 RNA-binding domain. Positions 158 to 177 (TSPFKQHPPTQQGEENVQQA) are disordered. The span at 165–177 (PPTQQGEENVQQA) shows a compositional bias: polar residues.

This sequence belongs to the universal ribosomal protein uS4 family. Part of the 30S ribosomal subunit. Contacts protein S5. The interaction surface between S4 and S5 is involved in control of translational fidelity.

In terms of biological role, one of the primary rRNA binding proteins, it binds directly to 16S rRNA where it nucleates assembly of the body of the 30S subunit. Functionally, with S5 and S12 plays an important role in translational accuracy. The chain is Small ribosomal subunit protein uS4 from Sulfurisphaera tokodaii (strain DSM 16993 / JCM 10545 / NBRC 100140 / 7) (Sulfolobus tokodaii).